The chain runs to 408 residues: Argininosuccinate synthase (408 aa).

ATP is bound by residues 10–18 (AYSGGLDTS) and A37. The L-citrulline site is built by Y90 and S95. G120 contributes to the ATP binding site. L-aspartate-binding residues include T122, N126, and D127. Residue N126 coordinates L-citrulline. The L-citrulline site is built by R130, S182, S191, E267, and Y279.

The protein belongs to the argininosuccinate synthase family. Type 1 subfamily. Homotetramer.

The protein resides in the cytoplasm. The enzyme catalyses L-citrulline + L-aspartate + ATP = 2-(N(omega)-L-arginino)succinate + AMP + diphosphate + H(+). It functions in the pathway amino-acid biosynthesis; L-arginine biosynthesis; L-arginine from L-ornithine and carbamoyl phosphate: step 2/3. This is Argininosuccinate synthase from Paraburkholderia xenovorans (strain LB400).